Reading from the N-terminus, the 162-residue chain is 3-isopropylmalate dehydratase small subunit (162 aa).

Belongs to the LeuD family. LeuD type 2 subfamily. As to quaternary structure, heterodimer of LeuC and LeuD.

It carries out the reaction (2R,3S)-3-isopropylmalate = (2S)-2-isopropylmalate. The protein operates within amino-acid biosynthesis; L-leucine biosynthesis; L-leucine from 3-methyl-2-oxobutanoate: step 2/4. Catalyzes the isomerization between 2-isopropylmalate and 3-isopropylmalate, via the formation of 2-isopropylmaleate. This chain is 3-isopropylmalate dehydratase small subunit, found in Pyrobaculum neutrophilum (strain DSM 2338 / JCM 9278 / NBRC 100436 / V24Sta) (Thermoproteus neutrophilus).